Reading from the N-terminus, the 98-residue chain is NADH-ubiquinone oxidoreductase chain 4L (98 aa).

Helical transmembrane passes span 1-21, 29-49, and 61-81; these read MSMV…GMLV, SLLC…VTIL, and IILL…LVMV.

This sequence belongs to the complex I subunit 4L family. As to quaternary structure, core subunit of respiratory chain NADH dehydrogenase (Complex I) which is composed of 45 different subunits.

It is found in the mitochondrion inner membrane. It catalyses the reaction a ubiquinone + NADH + 5 H(+)(in) = a ubiquinol + NAD(+) + 4 H(+)(out). Its function is as follows. Core subunit of the mitochondrial membrane respiratory chain NADH dehydrogenase (Complex I) which catalyzes electron transfer from NADH through the respiratory chain, using ubiquinone as an electron acceptor. Part of the enzyme membrane arm which is embedded in the lipid bilayer and involved in proton translocation. In Odobenus rosmarus rosmarus (Atlantic walrus), this protein is NADH-ubiquinone oxidoreductase chain 4L (MT-ND4L).